The following is a 137-amino-acid chain: MQKGAKNRLITIIICFCSAVIGVSIILYNLEKSIVFFVPPSKINEVEQGKELRVGGLVKVDSINKIAADKISFVITDNIKDLEIFYQGVLPALFRENQGIIAIGRLSNGKFIARELLAKHDENYRPPNTVIPAKAGI.

The Cytoplasmic segment spans residues 1–8 (MQKGAKNR). The helical; Signal-anchor for type II membrane protein transmembrane segment at 9–29 (LITIIICFCSAVIGVSIILYN) threads the bilayer. Residues 30–137 (LEKSIVFFVP…NTVIPAKAGI (108 aa)) are Periplasmic-facing. Heme-binding residues include His120 and Tyr124.

The protein belongs to the CcmE/CycJ family.

The protein resides in the cell inner membrane. In terms of biological role, heme chaperone required for the biogenesis of c-type cytochromes. Transiently binds heme delivered by CcmC and transfers the heme to apo-cytochromes in a process facilitated by CcmF and CcmH. This is Cytochrome c-type biogenesis protein CcmE from Rickettsia bellii (strain OSU 85-389).